The chain runs to 405 residues: Tyrosine--tRNA ligase (405 aa).

The 'HIGH' region signature appears at 48 to 57 (PSRPDLHLGH). The short motif at 232–236 (KMSKS) is the 'KMSKS' region element. Lys235 provides a ligand contact to ATP. One can recognise an S4 RNA-binding domain in the interval 339-400 (LPLVDLLTTL…AGKRKFFRIA (62 aa)).

This sequence belongs to the class-I aminoacyl-tRNA synthetase family. TyrS type 2 subfamily. As to quaternary structure, homodimer.

The protein resides in the cytoplasm. It carries out the reaction tRNA(Tyr) + L-tyrosine + ATP = L-tyrosyl-tRNA(Tyr) + AMP + diphosphate + H(+). Catalyzes the attachment of tyrosine to tRNA(Tyr) in a two-step reaction: tyrosine is first activated by ATP to form Tyr-AMP and then transferred to the acceptor end of tRNA(Tyr). This chain is Tyrosine--tRNA ligase, found in Chlorobium luteolum (strain DSM 273 / BCRC 81028 / 2530) (Pelodictyon luteolum).